A 142-amino-acid chain; its full sequence is Large ribosomal subunit protein uL13 (142 aa).

Belongs to the universal ribosomal protein uL13 family. Part of the 50S ribosomal subunit.

Its function is as follows. This protein is one of the early assembly proteins of the 50S ribosomal subunit, although it is not seen to bind rRNA by itself. It is important during the early stages of 50S assembly. The chain is Large ribosomal subunit protein uL13 from Buchnera aphidicola subsp. Schizaphis graminum (strain Sg).